Consider the following 856-residue polypeptide: 3-hydroxy-3-methylglutaryl-coenzyme A reductase (856 aa).

The next 4 membrane-spanning stretches (helical) occupy residues 12–32 (FCASHPWEVIVATLTLTVCML), 89–109 (ILGIAGLFTVFSSFVFSSSVI), 123–143 (LFFFLLLIDLSKATVLAQFAL), and 190–210 (VLCCFACMSVIVNYVVFMTFY). Residue asparagine 326 is glycosylated (N-linked (GlcNAc...) asparagine). The chain crosses the membrane as a helical span at residues 344 to 364 (SADHIVILILLLALAVKFVFF). The linker stretch occupies residues 365-443 (ETRDELTTTR…CEVMALVTSG (79 aa)). An N-linked (GlcNAc...) asparagine glycan is attached at asparagine 412. Residues 443–771 (GHIAGYQLEK…SCTMPSIEIG (329 aa)) are catalytic. Residues glutamate 528 and lysine 659 each act as charge relay system in the active site. The N-linked (GlcNAc...) asparagine glycan is linked to asparagine 700. The active-site Charge relay system is the aspartate 735. Histidine 834 serves as the catalytic Proton donor. The segment at 836–856 (RHNRSSVSTSGSEPSTPACKS) is disordered. Asparagine 838 carries N-linked (GlcNAc...) asparagine glycosylation. The segment covering 840–856 (SSVSTSGSEPSTPACKS) has biased composition (low complexity).

This sequence belongs to the HMG-CoA reductase family.

It is found in the endoplasmic reticulum membrane. It carries out the reaction (R)-mevalonate + 2 NADP(+) + CoA = (3S)-3-hydroxy-3-methylglutaryl-CoA + 2 NADPH + 2 H(+). It functions in the pathway metabolic intermediate biosynthesis; (R)-mevalonate biosynthesis; (R)-mevalonate from acetyl-CoA: step 3/3. With respect to regulation, the activity of HMG-CoA-reductase is suppressed by exogenous mevalonate. Functionally, synthesis of mevalonate for the production of non-sterol isoprenoids, which are essential for growth differentiation. In Blattella germanica (German cockroach), this protein is 3-hydroxy-3-methylglutaryl-coenzyme A reductase.